A 169-amino-acid chain; its full sequence is MIYKKNFSKLSPITNLIRSALLNCRGMYITLRYMFKPKVTLNYPLEKGPLSTRFRGEHALRKYKNGEERCIACKLCEAICPAQAITIEAQERDDGSRRTVRYDIDMTKCIYCGFCQEACPVDAIVEGPNFEYATETREELMYNKSKLLHNGQIWEEAIDLRIKKNSQFY.

2 consecutive 4Fe-4S ferredoxin-type domains span residues 61–90 and 100–129; these read RKYKNGEERCIACKLCEAICPAQAITIEAQ and VRYDIDMTKCIYCGFCQEACPVDAIVEGPN. [4Fe-4S] cluster-binding residues include Cys-70, Cys-73, Cys-76, Cys-80, Cys-109, Cys-112, Cys-115, and Cys-119.

The protein belongs to the complex I 23 kDa subunit family. As to quaternary structure, NDH-1 is composed of 14 different subunits. Subunits NuoA, H, J, K, L, M, N constitute the membrane sector of the complex. The cofactor is [4Fe-4S] cluster.

It localises to the cell inner membrane. The enzyme catalyses a quinone + NADH + 5 H(+)(in) = a quinol + NAD(+) + 4 H(+)(out). Its function is as follows. NDH-1 shuttles electrons from NADH, via FMN and iron-sulfur (Fe-S) centers, to quinones in the respiratory chain. The immediate electron acceptor for the enzyme in this species is believed to be ubiquinone. Couples the redox reaction to proton translocation (for every two electrons transferred, four hydrogen ions are translocated across the cytoplasmic membrane), and thus conserves the redox energy in a proton gradient. The sequence is that of NADH-quinone oxidoreductase subunit I from Ehrlichia chaffeensis (strain ATCC CRL-10679 / Arkansas).